Reading from the N-terminus, the 317-residue chain is 4-hydroxy-3-methylbut-2-enyl diphosphate reductase (317 aa).

Position 12 (Cys-12) interacts with [4Fe-4S] cluster. Positions 41 and 74 each coordinate (2E)-4-hydroxy-3-methylbut-2-enyl diphosphate. Positions 41 and 74 each coordinate dimethylallyl diphosphate. Residues His-41 and His-74 each contribute to the isopentenyl diphosphate site. Cys-97 is a [4Fe-4S] cluster binding site. A (2E)-4-hydroxy-3-methylbut-2-enyl diphosphate-binding site is contributed by His-125. His-125 provides a ligand contact to dimethylallyl diphosphate. His-125 lines the isopentenyl diphosphate pocket. The active-site Proton donor is the Glu-127. A (2E)-4-hydroxy-3-methylbut-2-enyl diphosphate-binding site is contributed by Thr-168. Cys-198 contacts [4Fe-4S] cluster. (2E)-4-hydroxy-3-methylbut-2-enyl diphosphate-binding residues include Ser-226, Ser-227, Asn-228, and Ser-270. Residues Ser-226, Ser-227, Asn-228, and Ser-270 each coordinate dimethylallyl diphosphate. The isopentenyl diphosphate site is built by Ser-226, Ser-227, Asn-228, and Ser-270.

It belongs to the IspH family. Homodimer. [4Fe-4S] cluster is required as a cofactor.

It carries out the reaction isopentenyl diphosphate + 2 oxidized [2Fe-2S]-[ferredoxin] + H2O = (2E)-4-hydroxy-3-methylbut-2-enyl diphosphate + 2 reduced [2Fe-2S]-[ferredoxin] + 2 H(+). The enzyme catalyses dimethylallyl diphosphate + 2 oxidized [2Fe-2S]-[ferredoxin] + H2O = (2E)-4-hydroxy-3-methylbut-2-enyl diphosphate + 2 reduced [2Fe-2S]-[ferredoxin] + 2 H(+). Its pathway is isoprenoid biosynthesis; dimethylallyl diphosphate biosynthesis; dimethylallyl diphosphate from (2E)-4-hydroxy-3-methylbutenyl diphosphate: step 1/1. It functions in the pathway isoprenoid biosynthesis; isopentenyl diphosphate biosynthesis via DXP pathway; isopentenyl diphosphate from 1-deoxy-D-xylulose 5-phosphate: step 6/6. Catalyzes the conversion of 1-hydroxy-2-methyl-2-(E)-butenyl 4-diphosphate (HMBPP) into a mixture of isopentenyl diphosphate (IPP) and dimethylallyl diphosphate (DMAPP). Acts in the terminal step of the DOXP/MEP pathway for isoprenoid precursor biosynthesis. The polypeptide is 4-hydroxy-3-methylbut-2-enyl diphosphate reductase (Serratia proteamaculans (strain 568)).